A 746-amino-acid polypeptide reads, in one-letter code: tRNA (cytosine(34)-C(5))-methyltransferase (746 aa).

The tract at residues M1–Q30 is disordered. Residues R18–Q30 are compositionally biased toward basic and acidic residues. S-adenosyl-L-methionine is bound by residues C184–K190, D216, D243, and D270. Residue C323 is the Nucleophile of the active site. Disordered stretches follow at residues Q454 to W475 and S701 to S746. Residues A463–S472 show a composition bias toward basic and acidic residues. Residues A704–A714 are compositionally biased toward acidic residues. Positions A731–S746 are enriched in polar residues.

This sequence belongs to the class I-like SAM-binding methyltransferase superfamily. RsmB/NOP family. TRM4 subfamily. In terms of tissue distribution, ubiquitously expressed during embryonic development. Some enrichment is observed in the proventriculus area of the foregut and in the hindgut.

It is found in the nucleus. The protein localises to the nucleolus. It catalyses the reaction cytidine(34) in tRNA precursor + S-adenosyl-L-methionine = 5-methylcytidine(34) in tRNA precursor + S-adenosyl-L-homocysteine + H(+). Its function is as follows. RNA methyltransferase that methylates tRNAs. Methylates cytosine to 5-methylcytosine (m5C) at position 34 of intron-containing tRNA(Leu)(CAA) precursors. Required for short-term memory. The polypeptide is tRNA (cytosine(34)-C(5))-methyltransferase (Drosophila melanogaster (Fruit fly)).